Reading from the N-terminus, the 198-residue chain is Na(+)-translocating NADH-quinone reductase subunit E (198 aa).

6 consecutive transmembrane segments (helical) span residues 11 to 31 (SVFI…FLAV), 35 to 55 (VSTA…AVPV), 77 to 97 (FLNF…LEMI), 110 to 130 (GIFL…SFMV), 140 to 160 (VVYG…LAGL), and 176 to 196 (LGIT…FSGI).

The protein belongs to the NqrDE/RnfAE family. In terms of assembly, composed of six subunits; NqrA, NqrB, NqrC, NqrD, NqrE and NqrF.

The protein localises to the cell inner membrane. It carries out the reaction a ubiquinone + n Na(+)(in) + NADH + H(+) = a ubiquinol + n Na(+)(out) + NAD(+). Functionally, NQR complex catalyzes the reduction of ubiquinone-1 to ubiquinol by two successive reactions, coupled with the transport of Na(+) ions from the cytoplasm to the periplasm. NqrA to NqrE are probably involved in the second step, the conversion of ubisemiquinone to ubiquinol. The chain is Na(+)-translocating NADH-quinone reductase subunit E from Haemophilus ducreyi (strain 35000HP / ATCC 700724).